The following is a 393-amino-acid chain: Major outer membrane protein P.IA (393 aa).

Residues 1–19 (MRKKLTALVLSALPLAAVA) form the signal peptide.

This sequence belongs to the Gram-negative porin family. Homotrimer.

The protein localises to the cell outer membrane. In terms of biological role, serves as a slightly cation selective porin. Major antigen on the gonococcal cell surface and it may have pathogenic properties in addition to its porin activity. The polypeptide is Major outer membrane protein P.IA (porA) (Neisseria meningitidis serogroup C).